The following is a 25-amino-acid chain: NWRKILGQIASVGAGLLGSLLAGYE.

It belongs to the grammistin family. Group 3 subfamily. In terms of assembly, exists as aggregates of 3-4 molecules. As to expression, expressed by the skin glands.

Its subcellular location is the secreted. Its function is as follows. Thanks to its abundant amphiphilic alpha-helices, it may integrate into membrane phospholipids, leading to lysis of the membrane. Has hemolytic activity. Has antibacterial activity with a broad spectrum against various species of bacteria including both Gram-positive and Gram-negative groups. Also has ichthyotoxic activity. The protein is Grammistin Pp 3 of Pogonoperca punctata (Clown grouper).